A 390-amino-acid chain; its full sequence is Formate-dependent phosphoribosylglycinamide formyltransferase (390 aa).

N(1)-(5-phospho-beta-D-ribosyl)glycinamide-binding positions include 19 to 20 (EL) and E79. Residues R111, K152, 157–162 (SSGKGQ), 192–195 (EGFV), and E200 contribute to the ATP site. In terms of domain architecture, ATP-grasp spans 116–305 (RLAAEELGLP…EFAIHARAIL (190 aa)). Residues E264 and E276 each contribute to the Mg(2+) site. N(1)-(5-phospho-beta-D-ribosyl)glycinamide-binding positions include D283, K353, and 360-361 (RR).

The protein belongs to the PurK/PurT family. As to quaternary structure, homodimer.

It catalyses the reaction N(1)-(5-phospho-beta-D-ribosyl)glycinamide + formate + ATP = N(2)-formyl-N(1)-(5-phospho-beta-D-ribosyl)glycinamide + ADP + phosphate + H(+). It functions in the pathway purine metabolism; IMP biosynthesis via de novo pathway; N(2)-formyl-N(1)-(5-phospho-D-ribosyl)glycinamide from N(1)-(5-phospho-D-ribosyl)glycinamide (formate route): step 1/1. Its function is as follows. Involved in the de novo purine biosynthesis. Catalyzes the transfer of formate to 5-phospho-ribosyl-glycinamide (GAR), producing 5-phospho-ribosyl-N-formylglycinamide (FGAR). Formate is provided by PurU via hydrolysis of 10-formyl-tetrahydrofolate. This chain is Formate-dependent phosphoribosylglycinamide formyltransferase, found in Marinobacter nauticus (strain ATCC 700491 / DSM 11845 / VT8) (Marinobacter aquaeolei).